Reading from the N-terminus, the 546-residue chain is Chaperonin GroEL (546 aa).

Residues 30–33 (TLGP), lysine 51, 87–91 (DGTTT), glycine 415, 479–481 (NAA), and aspartate 495 each bind ATP.

It belongs to the chaperonin (HSP60) family. Forms a cylinder of 14 subunits composed of two heptameric rings stacked back-to-back. Interacts with the co-chaperonin GroES.

The protein resides in the cytoplasm. The enzyme catalyses ATP + H2O + a folded polypeptide = ADP + phosphate + an unfolded polypeptide.. Its function is as follows. Together with its co-chaperonin GroES, plays an essential role in assisting protein folding. The GroEL-GroES system forms a nano-cage that allows encapsulation of the non-native substrate proteins and provides a physical environment optimized to promote and accelerate protein folding. The sequence is that of Chaperonin GroEL from Pseudomonas putida (strain ATCC 700007 / DSM 6899 / JCM 31910 / BCRC 17059 / LMG 24140 / F1).